Reading from the N-terminus, the 197-residue chain is Peptide deformylase (197 aa).

The Fe cation site is built by C106 and H148. Residue E149 is part of the active site. H152 contributes to the Fe cation binding site.

It belongs to the polypeptide deformylase family. Requires Fe(2+) as cofactor.

It carries out the reaction N-terminal N-formyl-L-methionyl-[peptide] + H2O = N-terminal L-methionyl-[peptide] + formate. Its function is as follows. Removes the formyl group from the N-terminal Met of newly synthesized proteins. Requires at least a dipeptide for an efficient rate of reaction. N-terminal L-methionine is a prerequisite for activity but the enzyme has broad specificity at other positions. The sequence is that of Peptide deformylase from Mycolicibacterium gilvum (strain PYR-GCK) (Mycobacterium gilvum (strain PYR-GCK)).